The chain runs to 185 residues: MKTKNEPKVILELAKESDLPEFQKKLQEAFAIAVIETFGDCEDGPIPSDNDVQESFNAPGAVVYHILQDGKNVGGAVVRINSQTNHNSLDLFYVSPEYHSQGIGLSAWKAIEAQYPDTVLWETVTPYFEKRNINFYVNKCGFHIVEFYNEHHSNPHMHRNGREDDKPLLNDDDFFRFVKIMKKKD.

One can recognise an N-acetyltransferase domain in the interval 9-169 (VILELAKESD…NGREDDKPLL (161 aa)).

This is an uncharacterized protein from Bacillus subtilis (strain 168).